A 562-amino-acid polypeptide reads, in one-letter code: Probable tRNA (uracil-O(2)-)-methyltransferase (562 aa).

A disordered region spans residues Val-520–Asn-546. The C3H1-type zinc finger occupies Asn-535–His-562.

Belongs to the TRM44 family.

The protein localises to the cytoplasm. It catalyses the reaction uridine(44) in tRNA(Ser) + S-adenosyl-L-methionine = 2'-O-methyluridine(44) in tRNA(Ser) + S-adenosyl-L-homocysteine + H(+). Functionally, probable adenosyl-L-methionine (AdoMet)-dependent tRNA (uracil-O(2)-)-methyltransferase. This Caenorhabditis briggsae protein is Probable tRNA (uracil-O(2)-)-methyltransferase.